A 612-amino-acid polypeptide reads, in one-letter code: uncharacterized protein (612 aa).

This is an uncharacterized protein from Rickettsia prowazekii (strain Madrid E).